We begin with the raw amino-acid sequence, 293 residues long: MNEQELKQMIEGILTEMSGGKTTDTVAAAPTKSVVETVITEGSIPDITEVDIKKQLLVPEPADREGYLKMKQMTPARLGLWRAGPRYKTETILRFRADHAVAQDSVFSYVSEDLVKEMNFIPVNTKCQDKDEYLTRPDLGREFDNEMVEVIRANTTKNAKLQIVVGDGLSSAAIEANIKDILPSIKQGLKMYNLDFDNIIFVKHCRVPSMDQIGEITGADVVCLLVGERPGLVTAESMSAYIAYKPTIGMPEARRTVISNIHSGGTPPVEAGAYIAELIHNMLEKKCSGIDLK.

Residues valine 207 and glutamate 228 each contribute to the adenosylcob(III)alamin site.

Belongs to the EutC family. In terms of assembly, the basic unit is a heterodimer which dimerizes to form tetramers. The heterotetramers trimerize; 6 large subunits form a core ring with 6 small subunits projecting outwards. The cofactor is adenosylcob(III)alamin.

Its subcellular location is the bacterial microcompartment. It catalyses the reaction ethanolamine = acetaldehyde + NH4(+). Its pathway is amine and polyamine degradation; ethanolamine degradation. In terms of biological role, catalyzes the deamination of various vicinal amino-alcohols to oxo compounds. Allows this organism to utilize ethanolamine as the sole source of nitrogen and carbon in the presence of external vitamin B12. In Listeria monocytogenes serotype 4b (strain CLIP80459), this protein is Ethanolamine ammonia-lyase small subunit.